We begin with the raw amino-acid sequence, 119 residues long: MSADSESMIESAPISFTDAAAAKVKELRDDEGNPNLKLRVYITGGGCAGFSYGFTFDETVNEDDTSVEKEGVILLVDAMSIQYLDGSVVDYEKGLMGSRFVVSNPNAATTCGCGSSFSV.

Residues Cys47, Cys111, and Cys113 each contribute to the iron-sulfur cluster site.

This sequence belongs to the HesB/IscA family. In terms of assembly, homodimer. Iron-sulfur cluster is required as a cofactor.

Functionally, required for insertion of 4Fe-4S clusters for at least IspG. This chain is Iron-sulfur cluster insertion protein ErpA, found in Alcanivorax borkumensis (strain ATCC 700651 / DSM 11573 / NCIMB 13689 / SK2).